A 402-amino-acid chain; its full sequence is Iripin-8 (402 aa).

Residues 1–16 form the signal peptide; that stretch reads MTRLLWLFAAITASLA. Residues Asn-164 and Asn-230 are each glycosylated (N-linked (GlcNAc...) asparagine).

It belongs to the serpin family. As to quaternary structure, interacts with host thrombin/F2. Interacts with host coagulation factor VII/F7 (activated). Interacts with host coagulation factor X/F10 (activated). Interacts with host coagulation factor XII/F12 (activated). Interacts with host coagulation factor IX/F9 (activated). Interacts with host plasmin/PLG. Interacts with host protein C/PROC (activated). Saliva (at protein level). Salivary gland. Midgut. Low-level expression in ovary.

It localises to the secreted. Functionally, serine protease inhibitor that modulates blood feeding of ticks on vertebrate species. Inhibits the intrinsic and common pathways of blood coagulation in the host. Inhibits host thrombin, factor VIIa, factor Xa, factor XIa, factor XIIa, plasmin and activated protein C. Inhibits host trypsin and kallikrein. Reduces host complement activity. Does not affect proliferation of CD4+ T-cells and neutrophil migration. The chain is Iripin-8 from Ixodes ricinus (Common tick).